A 299-amino-acid polypeptide reads, in one-letter code: Protoheme IX farnesyltransferase 1 (299 aa).

9 helical membrane passes run 25–45, 47–67, 95–115, 119–139, 147–167, 173–193, 217–237, 243–263, and 279–299; these read VVVL…RAGV, WSVL…AAVV, LPAL…LLAF, LTAW…TGFL, IVIG…AVSG, PLLL…ALAI, ALHI…PYAI, LYLA…WVLY, and IGYL…LLNL.

The protein belongs to the UbiA prenyltransferase family. Protoheme IX farnesyltransferase subfamily.

Its subcellular location is the cell inner membrane. It carries out the reaction heme b + (2E,6E)-farnesyl diphosphate + H2O = Fe(II)-heme o + diphosphate. Its pathway is porphyrin-containing compound metabolism; heme O biosynthesis; heme O from protoheme: step 1/1. Its function is as follows. Converts heme B (protoheme IX) to heme O by substitution of the vinyl group on carbon 2 of heme B porphyrin ring with a hydroxyethyl farnesyl side group. The protein is Protoheme IX farnesyltransferase 1 of Pseudomonas entomophila (strain L48).